The following is a 291-amino-acid chain: Meteorin (291 aa).

The first 21 residues, 1–21 (MLVAALLCALCCGLLAASARA), serve as a signal peptide directing secretion. Disulfide bonds link cysteine 28–cysteine 49, cysteine 80–cysteine 116, cysteine 169–cysteine 240, cysteine 172–cysteine 264, and cysteine 182–cysteine 286.

This sequence belongs to the meteorin family. Monomer.

The protein resides in the secreted. Its function is as follows. Involved in both glial cell differentiation and axonal network formation during neurogenesis. Promotes astrocyte differentiation and transforms cerebellar astrocytes into radial glia. Also induces axonal extension in small and intermediate neurons of sensory ganglia by activating nearby satellite glia. In Rattus norvegicus (Rat), this protein is Meteorin (Metrn).